Consider the following 1160-residue polypeptide: Carbamoyl phosphate synthase arginine-specific large chain, mitochondrial (1160 aa).

A carboxyphosphate synthetic domain region spans residues alanine 81–aspartate 478. 12 residues coordinate ATP: arginine 208, arginine 248, glycine 254, glycine 255, lysine 285, leucine 287, glutamate 292, glycine 318, isoleucine 319, histidine 320, glutamine 361, and glutamate 375. One can recognise an ATP-grasp 1 domain in the interval alanine 212–leucine 404. Positions 361, 375, and 377 each coordinate Mg(2+). Mn(2+) contacts are provided by glutamine 361, glutamate 375, and asparagine 377. The segment at proline 479 to aspartate 623 is oligomerization domain. Residues isoleucine 624 to glutamine 1012 are carbamoyl phosphate synthetic domain. Residues serine 748–isoleucine 946 enclose the ATP-grasp 2 domain. Residues arginine 784, lysine 823, isoleucine 825, glutamate 830, glycine 855, valine 856, histidine 857, serine 858, glutamine 898, and glutamate 917 each coordinate ATP. Positions 898, 917, and 919 each coordinate Mg(2+). Residues glutamine 898, glutamate 917, and asparagine 919 each contribute to the Mn(2+) site. Positions asparagine 1013–methionine 1144 are allosteric domain. Residues phenylalanine 1014–leucine 1160 form the MGS-like domain.

This sequence belongs to the CarB family. Heterodimer composed of 2 chains; the small (or glutamine) chain promotes the hydrolysis of glutamine to ammonia, which is used by the large (or ammonia) chain to synthesize carbamoyl phosphate. Requires Mg(2+) as cofactor. The cofactor is Mn(2+).

It localises to the mitochondrion. The catalysed reaction is hydrogencarbonate + L-glutamine + 2 ATP + H2O = carbamoyl phosphate + L-glutamate + 2 ADP + phosphate + 2 H(+). The enzyme catalyses hydrogencarbonate + NH4(+) + 2 ATP = carbamoyl phosphate + 2 ADP + phosphate + 2 H(+). The protein operates within amino-acid biosynthesis; L-arginine biosynthesis; carbamoyl phosphate from bicarbonate: step 1/1. Functionally, large subunit of the arginine-specific carbamoyl phosphate synthase (CPSase). CPSase catalyzes the formation of carbamoyl phosphate from the ammonia moiety of glutamine, hydrogencarbonate, and phosphate donated by ATP, the first step of the arginine biosynthetic pathway. The large subunit (synthetase) binds the substrates ammonia (free or transferred from glutamine from the small subunit), hydrogencarbonate and ATP and carries out an ATP-coupled ligase reaction, activating hydrogencarbonate by forming carboxy phosphate which reacts with ammonia to form carbamoyl phosphate. The protein is Carbamoyl phosphate synthase arginine-specific large chain, mitochondrial (arg4) of Schizosaccharomyces pombe (strain 972 / ATCC 24843) (Fission yeast).